Here is a 511-residue protein sequence, read N- to C-terminus: GMP synthase [glutamine-hydrolyzing] (511 aa).

Residues 5–195 (DILVLDFGSQ…AKYACNCESV (191 aa)) form the Glutamine amidotransferase type-1 domain. The active-site Nucleophile is C82. Catalysis depends on residues H169 and E171. Residues 196-386 (WNMGSFAKTQ…LGLSKEVVYR (191 aa)) enclose the GMPS ATP-PPase domain. 223 to 229 (SGGVDSS) lines the ATP pocket.

Homodimer.

The catalysed reaction is XMP + L-glutamine + ATP + H2O = GMP + L-glutamate + AMP + diphosphate + 2 H(+). It functions in the pathway purine metabolism; GMP biosynthesis; GMP from XMP (L-Gln route): step 1/1. Functionally, catalyzes the synthesis of GMP from XMP. This chain is GMP synthase [glutamine-hydrolyzing], found in Campylobacter jejuni (strain RM1221).